An 833-amino-acid chain; its full sequence is DNA helicase MCM8 (833 aa).

Residues 395-602 (LLKLVVNSLC…QHDHLLSEHV (208 aa)) form the MCM domain. 447–454 (GDPGLGKS) is an ATP binding site. The residue at position 623 (Ser623) is a Phosphoserine.

This sequence belongs to the MCM family. As to quaternary structure, component of the MCM8-MCM9 complex, which forms a hexamer composed of MCM8 and MCM9. Interacts with the DNA mismatch repair (MMR) complex composed at least of MSH2, MSH3, MSH6, PMS1 and MLH1. Interacts with RAD51; the interaction recruits RAD51 to DNA damage sites. Interacts with the MRN complex composed of MRE11, RAD50 and NBN/NBS1. Interacts with CDC6 and ORC2. Interacts with HROB; the interaction recruits the MCM8-MCM9 complex to DNA damage sites.

Its subcellular location is the nucleus. The protein localises to the chromosome. It catalyses the reaction ATP + H2O = ADP + phosphate + H(+). In terms of biological role, component of the MCM8-MCM9 complex, a complex involved in the repair of double-stranded DNA breaks (DBSs) and DNA interstrand cross-links (ICLs) by homologous recombination (HR). Required for DNA resection by the MRE11-RAD50-NBN/NBS1 (MRN) complex by recruiting the MRN complex to the repair site and by promoting the complex nuclease activity. Probably by regulating the localization of the MNR complex, indirectly regulates the recruitment of downstream effector RAD51 to DNA damage sites including DBSs and ICLs. The MCM8-MCM9 complex is dispensable for DNA replication and S phase progression. However, may play a non-essential for DNA replication: may be involved in the activation of the prereplicative complex (pre-RC) during G(1) phase by recruiting CDC6 to the origin recognition complex (ORC). Probably by regulating HR, plays a key role during gametogenesis. Stabilizes MCM9 protein. This Mus musculus (Mouse) protein is DNA helicase MCM8 (Mcm8).